An 814-amino-acid polypeptide reads, in one-letter code: Echinoderm microtubule-associated protein-like 1 (814 aa).

The stretch at 31–72 forms a coiled coil; sequence SMEVSDRIASLEQRVQMQEDDIQLLKSALADVVRRLNITEEQ. The interval 77-180 is disordered; sequence NRKGPTKARP…ESKPKEPAFS (104 aa). Over residues 92 to 101 the composition is skewed to polar residues; it reads PLRTTVNNGT. Over residues 103-115 the composition is skewed to low complexity; the sequence is LPKKPSASLPAPS. A compositionally biased stretch (polar residues) spans 127-137; the sequence is KSINRTSSSER. Basic and acidic residues predominate over residues 142 to 152; it reads GRRESSGDSKG. Residues 155–167 are compositionally biased toward low complexity; that stretch reads NRTGSTSSSSSGK. The tandem atypical propeller in EMLs stretch occupies residues 175-814; it reads KEPAFSPEEG…DTSIMQWRVI (640 aa). WD repeat units follow at residues 260–309, 314–357, 362–399, 408–445, 449–488, 492–529, 534–571, 577–612, 616–654, 663–700, 708–767, and 774–813; these read EQLQ…IWDS, TLHV…VWDW, RLADVKCSNEAVFAADFHPTDTNIIVTCGKSHLYFWTL, QGLFEKQEKPKFVLCVTFSENGDTITGDSSGNILVWGK, RISYAVQGAHEGGIFALCMLRDGTLVSGGGKDRRLISWNG, KLHKAEIPEQFGPIRTVAEGKGNVILIGTTRNFVLQGT, FTPITQGHTDELWGLAIHASKPQFLTCGHDKHATLWDA, VWDKIIEDPAQSSGFHPSGSVVAVGTLTGRWFVFDT, DLVTVHTDGNEQLSVMRYSPDGNFLAIGSHDNCIYIYGV, RVGKCSGHSSFITHLDWSVNSQFLVSNSGDYEILYWVP, SVET…LFSY, and APSHIYSGHSSHVTNVDFLCEDSHLISTGGKDTSIMQWRV.

This sequence belongs to the WD repeat EMAP family. In terms of assembly, homotrimer; self-association is mediated by the N-terminal coiled coil. Does not interact with EML3. Binds unpolymerized tubulins via its WD repeat region. Binds repolymerizing microtubules. Interacts with TASOR. Detected in adult brain cortex, hippocampus and thalamus. Expressed in the stomach, lungs and in Sertoli cells of the testis.

The protein localises to the cytoplasm. It localises to the perinuclear region. Its subcellular location is the cytoskeleton. Its function is as follows. Modulates the assembly and organization of the microtubule cytoskeleton, and probably plays a role in regulating the orientation of the mitotic spindle and the orientation of the plane of cell division. Required for normal proliferation of neuronal progenitor cells in the developing brain and for normal brain development. Does not affect neuron migration per se. In Mus musculus (Mouse), this protein is Echinoderm microtubule-associated protein-like 1 (Eml1).